Here is a 532-residue protein sequence, read N- to C-terminus: UDP-glucuronosyltransferase 1A4 (532 aa).

The first 27 residues, 1-27 (MVLGVWITLWRLVRLLLLLCVLPWAEG), serve as a signal peptide directing secretion. N-linked (GlcNAc...) asparagine glycans are attached at residues asparagine 141 and asparagine 295. Residues 490-506 (VIGFLLAIVLTVAFVTF) traverse the membrane as a helical segment.

This sequence belongs to the UDP-glycosyltransferase family. As to quaternary structure, homodimers. Homooligomer. Interacts with UGT1A1, UGT1A3, UGT1A6, UGT1A7, UGT1A8, UGT1A9 and UGT1A10 to form heterodimers.

Its subcellular location is the endoplasmic reticulum membrane. The catalysed reaction is glucuronate acceptor + UDP-alpha-D-glucuronate = acceptor beta-D-glucuronoside + UDP + H(+). It carries out the reaction calcidiol + UDP-alpha-D-glucuronate = calcidiol 25-O-(beta-D-glucuronide) + UDP + H(+). The enzyme catalyses calcidiol + UDP-alpha-D-glucuronate = calcidiol 3-O-(beta-D-glucuronide) + UDP + H(+). It catalyses the reaction calcitriol + UDP-alpha-D-glucuronate = calcitriol 25-O-(beta-D-glucuronide) + UDP + H(+). The catalysed reaction is (5Z,8Z,11Z,14Z)-eicosatetraenoate + UDP-alpha-D-glucuronate = O-[(5Z),(8Z),(11Z),(14Z)-eicosatetraenoyl]-beta-D-glucuronate + UDP. It carries out the reaction 15-hydroxy-(5Z,8Z,11Z,13E)-eicosatetraenoate + UDP-alpha-D-glucuronate = 15-O-(beta-D-glucuronosyl)-(5Z,8Z,11Z,14Z)-eicosatetraenoate + UDP + H(+). The enzyme catalyses 20-hydroxy-(5Z,8Z,11Z,14Z)-eicosatetraenoate + UDP-alpha-D-glucuronate = 20-O-(beta-D-glucuronosyl)-(5Z,8Z,11Z,14Z)-eicosatetraenoate + UDP + H(+). Its function is as follows. UDP-glucuronosyltransferase (UGT) that catalyzes phase II biotransformation reactions in which lipophilic substrates are conjugated with glucuronic acid to increase the metabolite's water solubility, thereby facilitating excretion into either the urine or bile. Essential for the elimination and detoxification of drugs, xenobiotics and endogenous compounds. Involved in the glucuronidation of calcidiol, which is the major circulating form of vitamin D3 essential for the regulation of calcium and phosphate homeostasis. Also glucuronidates the biologically active form of vitamin D3, calcitriol, probably leading to its biliary transport and intestinal reabsorption. Involved in the glucuronidation of arachidonic acid (AA) and AA-derived eicosanoids including 15-HETE, 20-HETE and PGB1. This Oryctolagus cuniculus (Rabbit) protein is UDP-glucuronosyltransferase 1A4 (Ugt1a4).